A 340-amino-acid polypeptide reads, in one-letter code: Major histocompatibility complex class I-related gene protein (340 aa).

The first 22 residues, 1 to 22 (MGELMAFLLPLIIVLMVKHSNS), serve as a signal peptide directing secretion. The tract at residues 23 to 109 (RTHSLRYFRL…KRLQRHYNHS (87 aa)) is alpha-1. The tract at residues 23–201 (RTHSLRYFRL…EYGKDTLQRT (179 aa)) is antigen-binding cleft. Residues 23 to 302 (RTHSLRYFRL…QESEAIPLVM (280 aa)) are Extracellular-facing. 8-(9H-purin-6-yl)-2-oxa-8-azabicyclo[3.3.1]nona-3,6-diene-4,6-dicarbaldehyde contacts are provided by tyrosine 29 and arginine 31. The 5-(2-oxoethylideneamino)-6-(D-ribitylamino)uracil site is built by arginine 31, serine 46, and lysine 65. The 5-(2-oxopropylideneamino)-6-(D-ribitylamino)uracil site is built by arginine 31, serine 46, and lysine 65. 7-hydroxy-6-methyl-8-(1-D-ribityl)lumazine is bound by residues arginine 31, serine 46, and lysine 65. 8-(9H-purin-6-yl)-2-oxa-8-azabicyclo[3.3.1]nona-3,6-diene-4,6-dicarbaldehyde-binding residues include lysine 65 and histidine 80. Lysine 65 serves as a coordination point for 2-amino-4-oxopteridine-6-carbaldehyde. Pyridoxal is bound at residue lysine 65. Asparagine 107 carries an N-linked (GlcNAc...) asparagine glycan. Residues 110–201 (GSHTYQRMIG…EYGKDTLQRT (92 aa)) are alpha-2. Arginine 116 contributes to the 8-(9H-purin-6-yl)-2-oxa-8-azabicyclo[3.3.1]nona-3,6-diene-4,6-dicarbaldehyde binding site. Residues arginine 116, tyrosine 174, and glutamine 175 each coordinate 5-(2-oxoethylideneamino)-6-(D-ribitylamino)uracil. 5-(2-oxopropylideneamino)-6-(D-ribitylamino)uracil-binding residues include arginine 116, tyrosine 174, and glutamine 175. Residues arginine 116, tyrosine 174, and glutamine 175 each coordinate 7-hydroxy-6-methyl-8-(1-D-ribityl)lumazine. 2 cysteine pairs are disulfide-bonded: cysteine 120-cysteine 183 and cysteine 222-cysteine 278. Positions 202–293 (EPPLVRVNRK…GVHMVLQVPQ (92 aa)) are alpha-3. The Ig-like C1-type domain occupies 203 to 282 (PPLVRVNRKE…SNLYSCHVEH (80 aa)). Residues 294–302 (ESEAIPLVM) form a connecting peptide region. The chain crosses the membrane as a helical span at residues 303–323 (KAVSGSIVFVIVLTGVGVLVW). Over 324-340 (RRRPREQNGAVYLPTPD) the chain is Cytoplasmic.

It belongs to the MHC class I family. Heterotrimer that consists of MR1, B2M and metabolite antigen. Major classes of metabolite ligands presented by MR1 include riboflavin-related antigens, pyrimidines and ribityl lumazines, nucleobase adducts and folate derivatives. Forms reversible covalent Schiff base complexes with microbial pyrimidine-based metabolite, which serves as a molecular switch triggering complete folding, stable association with B2M and translocation of the ternary complex from endoplasmic reticulum to the plasma membrane. Alternatively, forms non-Schiff base complexes with ribityl lumazines. On antigen-presenting cells, the ternary complex interacts with TCR on MR1-restricted T cells. Interacts with TAPBP and TAPBPL chaperones in the endoplasmic reticulum. TAPBP associated or not with MHC class I peptide loading complex binds ligand-free MR1 or MR1-B2M complex, providing for stable MR1 pools ready for metabolite antigen processing. TAPBPL interacts with MR1 in a ligand-independent way; this interaction may stabilize MR1 pool and facilitate ligand loading and dissociation. Structurally, MR1-B2M heterodimer adopts a topology similar to classical MHC class I molecules, with alpha-1 and alpha-2 domains of MR1 forming the antigen-binding cleft composed of two alpha-helices resting on a floor of 7-stranded anti-parallel beta-pleated sheet. MR1-B2M heterodimer (via alpha-helices) interacts with TCR (via CDR domains). N-glycosylated.

It is found in the cell membrane. The protein resides in the endoplasmic reticulum membrane. Its subcellular location is the golgi apparatus membrane. The protein localises to the early endosome membrane. It localises to the late endosome membrane. Antigen-presenting molecule specialized in displaying microbial pyrimidine-based metabolites to alpha-beta T cell receptors (TCR) on innate-type mucosal-associated invariant T (MAIT) cells. In complex with B2M preferentially presents riboflavin-derived metabolites to semi-invariant TCRs on MAIT cells, guiding immune surveillance of the microbial metabolome at mucosal epithelial barriers. Signature pyrimidine-based microbial antigens are generated via non-enzymatic condensation of metabolite intermediates of the riboflavin pathway with by-products arising from other metabolic pathways such as glycolysis. Typical potent antigenic metabolites are 5-(2-oxoethylideneamino)-6-D-ribitylaminouracil (5-OE-RU) and 5-(2-oxopropylideneamino)-6-D-ribitylaminouracil (5-OP-RU), products of condensation of 5-amino-6-D-ribityaminouracil (5-A-RU) with glyoxal or methylglyoxal by-products, respectively. May present microbial antigens to various MAIT cell subsets, providing for unique recognition of diverse microbes, including pathogens that do not synthesize riboflavin. Upon antigen recognition, elicits rapid innate-type MAIT cell activation to eliminate pathogenic microbes by directly killing infected cells. During T cell development, drives thymic selection and post-thymic terminal differentiation of MAIT cells in a process dependent on commensal microflora. Acts as an immune sensor of cancer cell metabolome. May present a tumor-specific or -associated metabolite essential for cancer cell survival to a pan-cancer TCR on a non-MAIT CD8-positive T cell clone, triggering T cell-mediated killing of a wide range of cancer cell types. May present tumor-enriched pyridoxal and pyridoxal 5'-phosphate antigens, enabling preferential recognition of cancer cells. Presents nucleobase carbonyl adducts generated during oxidative stress. Captures M3Ade, a nucleobase adduct composed of one adenine modified by a malondialdehyde trimer, for recognition by MR1-restricted T cell clones expressing a polyclonal TCR repertoire. This is Major histocompatibility complex class I-related gene protein from Pongo pygmaeus (Bornean orangutan).